A 392-amino-acid chain; its full sequence is Succinate--CoA ligase [ADP-forming] subunit beta (392 aa).

Residues 9 to 248 enclose the ATP-grasp domain; it reads KDILKKFGVS…TNEEDPFEVE (240 aa). ATP contacts are provided by residues Lys50, 57-59, Glu103, Met106, and Glu111; that span reads GRG. Asn203 and Asp217 together coordinate Mg(2+). Substrate-binding positions include Asn268 and 325–327; that span reads GIV.

The protein belongs to the succinate/malate CoA ligase beta subunit family. As to quaternary structure, heterotetramer of two alpha and two beta subunits. The cofactor is Mg(2+).

The catalysed reaction is succinate + ATP + CoA = succinyl-CoA + ADP + phosphate. It catalyses the reaction GTP + succinate + CoA = succinyl-CoA + GDP + phosphate. Its pathway is carbohydrate metabolism; tricarboxylic acid cycle; succinate from succinyl-CoA (ligase route): step 1/1. Functionally, succinyl-CoA synthetase functions in the citric acid cycle (TCA), coupling the hydrolysis of succinyl-CoA to the synthesis of either ATP or GTP and thus represents the only step of substrate-level phosphorylation in the TCA. The beta subunit provides nucleotide specificity of the enzyme and binds the substrate succinate, while the binding sites for coenzyme A and phosphate are found in the alpha subunit. This chain is Succinate--CoA ligase [ADP-forming] subunit beta, found in Chlorobium limicola (strain DSM 245 / NBRC 103803 / 6330).